The primary structure comprises 405 residues: Acetate kinase (405 aa).

Position 7 (N7) interacts with Mg(2+). K14 is a binding site for ATP. R99 serves as a coordination point for substrate. D156 functions as the Proton donor/acceptor in the catalytic mechanism. ATP-binding positions include 215–219 (HLGNG), 290–292 (DMR), and 338–342 (GVGEH). E391 contributes to the Mg(2+) binding site.

It belongs to the acetokinase family. As to quaternary structure, homodimer. It depends on Mg(2+) as a cofactor. Requires Mn(2+) as cofactor.

It localises to the cytoplasm. The catalysed reaction is acetate + ATP = acetyl phosphate + ADP. Its pathway is metabolic intermediate biosynthesis; acetyl-CoA biosynthesis; acetyl-CoA from acetate: step 1/2. In terms of biological role, catalyzes the formation of acetyl phosphate from acetate and ATP. Can also catalyze the reverse reaction. The protein is Acetate kinase of Nostoc punctiforme (strain ATCC 29133 / PCC 73102).